We begin with the raw amino-acid sequence, 136 residues long: Large ribosomal subunit protein uL16c (136 aa).

Belongs to the universal ribosomal protein uL16 family. In terms of assembly, part of the 50S ribosomal subunit.

The protein localises to the plastid. It is found in the chloroplast. This is Large ribosomal subunit protein uL16c from Citrus sinensis (Sweet orange).